A 543-amino-acid chain; its full sequence is Glutamyl-tRNA(Gln) amidotransferase subunit A, chloroplastic/mitochondrial (543 aa).

Catalysis depends on charge relay system residues Lys-123 and Ser-198. Residue Ser-222 is the Acyl-ester intermediate of the active site.

It belongs to the amidase family. GatA subfamily. As to quaternary structure, subunit of the heterotrimeric GatCAB amidotransferase (AdT) complex, composed of A, B and C subunits.

Its subcellular location is the mitochondrion. The protein localises to the plastid. The protein resides in the chloroplast stroma. The enzyme catalyses L-glutamyl-tRNA(Gln) + L-glutamine + ATP + H2O = L-glutaminyl-tRNA(Gln) + L-glutamate + ADP + phosphate + H(+). In terms of biological role, allows the formation of correctly charged Gln-tRNA(Gln) through the transamidation of misacylated Glu-tRNA(Gln) in chloroplasts and mitochondria. The reaction takes place in the presence of glutamine and ATP through an activated gamma-phospho-Glu-tRNA(Gln). The protein is Glutamyl-tRNA(Gln) amidotransferase subunit A, chloroplastic/mitochondrial of Oryza sativa subsp. indica (Rice).